The sequence spans 241 residues: ATP synthase subunit a (241 aa).

5 consecutive transmembrane segments (helical) span residues 30–50 (GQVF…ISLG), 91–111 (FIGT…LIPW), 128–148 (INTT…AGLS), 193–213 (LVVG…VMFL), and 214–234 (GLFT…YYIG).

The protein belongs to the ATPase A chain family. F-type ATPases have 2 components, CF(1) - the catalytic core - and CF(0) - the membrane proton channel. CF(1) has five subunits: alpha(3), beta(3), gamma(1), delta(1), epsilon(1). CF(0) has four main subunits: a, b, b' and c.

The protein localises to the cellular thylakoid membrane. In terms of biological role, key component of the proton channel; it plays a direct role in the translocation of protons across the membrane. The polypeptide is ATP synthase subunit a (Prochlorococcus marinus (strain MIT 9515)).